The following is a 384-amino-acid chain: Lipid-A-disaccharide synthase (384 aa).

This sequence belongs to the LpxB family.

The enzyme catalyses a lipid X + a UDP-2-N,3-O-bis[(3R)-3-hydroxyacyl]-alpha-D-glucosamine = a lipid A disaccharide + UDP + H(+). It participates in bacterial outer membrane biogenesis; LPS lipid A biosynthesis. Condensation of UDP-2,3-diacylglucosamine and 2,3-diacylglucosamine-1-phosphate to form lipid A disaccharide, a precursor of lipid A, a phosphorylated glycolipid that anchors the lipopolysaccharide to the outer membrane of the cell. This chain is Lipid-A-disaccharide synthase, found in Gloeothece citriformis (strain PCC 7424) (Cyanothece sp. (strain PCC 7424)).